Reading from the N-terminus, the 164-residue chain is Cyanate hydratase (164 aa).

Active-site residues include Arg-90, Glu-93, and Ser-116.

It belongs to the cyanase family.

The catalysed reaction is cyanate + hydrogencarbonate + 3 H(+) = NH4(+) + 2 CO2. Catalyzes the reaction of cyanate with bicarbonate to produce ammonia and carbon dioxide. The sequence is that of Cyanate hydratase from Ricinus communis (Castor bean).